A 257-amino-acid chain; its full sequence is NAD-capped RNA hydrolase NudC (257 aa).

Substrate is bound at residue R69. Zn(2+) is bound by residues C98 and C101. E111 is a substrate binding site. 2 residues coordinate Zn(2+): C116 and C119. Y124 lines the substrate pocket. The Nudix hydrolase domain maps to P125–T248. A158, E174, and E178 together coordinate a divalent metal cation. The Nudix box signature appears at G159–G180. Residue Q192–S199 coordinates substrate. Residue E219 participates in a divalent metal cation binding. Position 241 (A241) interacts with substrate.

It belongs to the Nudix hydrolase family. NudC subfamily. As to quaternary structure, homodimer. Mg(2+) serves as cofactor. The cofactor is Mn(2+). It depends on Zn(2+) as a cofactor.

It carries out the reaction a 5'-end NAD(+)-phospho-ribonucleoside in mRNA + H2O = a 5'-end phospho-adenosine-phospho-ribonucleoside in mRNA + beta-nicotinamide D-ribonucleotide + 2 H(+). The catalysed reaction is NAD(+) + H2O = beta-nicotinamide D-ribonucleotide + AMP + 2 H(+). It catalyses the reaction NADH + H2O = reduced beta-nicotinamide D-ribonucleotide + AMP + 2 H(+). In terms of biological role, mRNA decapping enzyme that specifically removes the nicotinamide adenine dinucleotide (NAD) cap from a subset of mRNAs by hydrolyzing the diphosphate linkage to produce nicotinamide mononucleotide (NMN) and 5' monophosphate mRNA. The NAD-cap is present at the 5'-end of some mRNAs and stabilizes RNA against 5'-processing. Has preference for mRNAs with a 5'-end purine. Catalyzes the hydrolysis of a broad range of dinucleotide pyrophosphates. This Salmonella dublin (strain CT_02021853) protein is NAD-capped RNA hydrolase NudC.